The chain runs to 228 residues: RNA chaperone ProQ (228 aa).

Residues 105-178 (EAKARVQAQR…REEQHTPVSD (74 aa)) form a disordered region. 2 stretches are compositionally biased toward basic and acidic residues: residues 117–136 (QQAKKREAAAAAGEKEDAPR) and 146–173 (RRKETTPRTPRAEKPAAKAPRAPREEQH).

The protein belongs to the ProQ family.

Its subcellular location is the cytoplasm. In terms of biological role, RNA chaperone with significant RNA binding, RNA strand exchange and RNA duplexing activities. May regulate ProP activity through an RNA-based, post-transcriptional mechanism. The protein is RNA chaperone ProQ of Citrobacter koseri (strain ATCC BAA-895 / CDC 4225-83 / SGSC4696).